Here is a 1021-residue protein sequence, read N- to C-terminus: Sodium/potassium-transporting ATPase subunit alpha-1 (1021 aa).

Positions 1-5 are excised as a propeptide; the sequence is MGKGV. A compositionally biased stretch (basic and acidic residues) spans 1–11; that stretch reads MGKGVGRDKYE. The tract at residues 1-36 is disordered; sequence MGKGVGRDKYEPAAVSEHGDKKKAKKERDMDELKKE. The Cytoplasmic segment spans residues 6–85; sequence GRDKYEPAAV…NALTPPPTTP (80 aa). K9 is modified (N6-acetyllysine). Position 10 is a phosphotyrosine (Y10). Position 16 is a phosphoserine; by PKC (S16). K21 bears the N6-acetyllysine mark. A compositionally biased stretch (basic and acidic residues) spans 26–36; that stretch reads KERDMDELKKE. Phosphoserine occurs at positions 38 and 45. Residues 80-82 are phosphoinositide-3 kinase binding; that stretch reads PPP. The chain crosses the membrane as a helical span at residues 86-106; the sequence is EWVKFCRQLFGGFSMLLWIGA. Topologically, residues 107–129 are extracellular; the sequence is VLCFLAYGIQAATEEEPQNDNLY. A helical transmembrane segment spans residues 130 to 150; sequence LGVVLSAVVIITGCFSYYQEA. The Cytoplasmic portion of the chain corresponds to 151 to 286; that stretch reads KSSKIMESFK…GGQTPIAAEI (136 aa). A Phosphoserine modification is found at S226. The residue at position 258 (Y258) is a Phosphotyrosine. A helical membrane pass occupies residues 287-306; that stretch reads EHFIHIITGVAVFLGVSFFI. Residues 307–318 lie on the Extracellular side of the membrane; that stretch reads LSLILEYTWLEA. The chain crosses the membrane as a helical span at residues 319 to 336; the sequence is VIFLIGIIVANVPEGLLA. Residues 337–770 are Cytoplasmic-facing; sequence TVTVCLTLTA…EEGRLIFDNL (434 aa). The active-site 4-aspartylphosphate intermediate is D374. Phosphoserine is present on residues S450 and S482. Residue K485 participates in ATP binding. Y540 bears the Phosphotyrosine mark. The mediates interaction with SCN7A stretch occupies residues 594-715; the sequence is RAAVPDAVGK…QGAIVAVTGD (122 aa). Residue S666 is modified to Phosphoserine. Mg(2+) is bound by residues D715 and D719. A helical membrane pass occupies residues 771-790; sequence KKSIAYTLTSNIPEITPFLI. At 791–800 the chain is on the extracellular side; it reads FIIANIPLPL. Residues 801–821 traverse the membrane as a helical segment; sequence GTVTILCIDLGTDMVPAISLA. Residues 822–841 are Cytoplasmic-facing; sequence YEQAESDIMKRQPRNPQTDK. The helical transmembrane segment at 842 to 864 threads the bilayer; it reads LVNERLISMAYGQIGMIQALGGF. The Extracellular segment spans residues 865-916; it reads FTYFVIMAENGFLPNHLLGIRVTWDDRWINDVEDSYGQQWTYEQRKIVEFTC. A helical transmembrane segment spans residues 917–936; sequence HTAFFVSIVVVQWADLVICK. Residues 937–949 lie on the Cytoplasmic side of the membrane; sequence TRRNSVFQQGMKN. At S941 the chain carries Phosphoserine; by PKA. The chain crosses the membrane as a helical span at residues 950–968; it reads KILIFGLFEETALAAFLSY. The Extracellular segment spans residues 969–983; sequence CPGMGVALRMYPLKP. Residues 984–1004 traverse the membrane as a helical segment; the sequence is TWWFCAFPYSLLIFVYDEVRK. Residues 1005–1021 are Cytoplasmic-facing; sequence LIIRRRPGGWVEKETYY.

This sequence belongs to the cation transport ATPase (P-type) (TC 3.A.3) family. Type IIC subfamily. The sodium/potassium-transporting ATPase is composed of a catalytic alpha subunit, an auxiliary non-catalytic beta subunit and an additional regulatory subunit. Interacts with regulatory subunit FXYD1. Interacts with regulatory subunit FXYD3. Interacts with SIK1. Interacts with SLC35G1 and STIM1. Interacts with CLN3; this interaction regulates the sodium/potassium-transporting ATPase complex localization at the plasma membrane. Interacts with SCN7A; activates ATP1A1 P-type sodium:potassium-exchanging transporter activity which indirectly signals to nearby neurons to regulate sodium homeostasis. Phosphorylation on Tyr-10 modulates pumping activity. Phosphorylation of Ser-941 by PKA modulates the response of ATP1A1 to PKC. Dephosphorylation by protein phosphatase 2A (PP2A) following increases in intracellular sodium, leading to increase catalytic activity.

It localises to the cell membrane. The protein resides in the basolateral cell membrane. The protein localises to the sarcolemma. It is found in the cell projection. Its subcellular location is the axon. It localises to the melanosome. The catalysed reaction is K(+)(out) + Na(+)(in) + ATP + H2O = K(+)(in) + Na(+)(out) + ADP + phosphate + H(+). In terms of biological role, this is the catalytic component of the active enzyme, which catalyzes the hydrolysis of ATP coupled with the exchange of sodium and potassium ions across the plasma membrane. This action creates the electrochemical gradient of sodium and potassium ions, providing the energy for active transport of various nutrients. Could also be part of an osmosensory signaling pathway that senses body-fluid sodium levels and controls salt intake behavior as well as voluntary water intake to regulate sodium homeostasis. The sequence is that of Sodium/potassium-transporting ATPase subunit alpha-1 (ATP1A1) from Bos taurus (Bovine).